The sequence spans 313 residues: Adhesin MafA 1 (313 aa).

Residues M1–A14 form the signal peptide. C15 is lipidated: N-palmitoyl cysteine. C15 carries S-diacylglycerol cysteine lipidation. Positions G282–K298 are enriched in polar residues. A disordered region spans residues G282–G313.

Belongs to the MafA family.

Its subcellular location is the cell outer membrane. This is Adhesin MafA 1 (mafA1) from Neisseria meningitidis serogroup C / serotype 2a (strain ATCC 700532 / DSM 15464 / FAM18).